The following is a 314-amino-acid chain: Ribosomal RNA small subunit methyltransferase H (314 aa).

S-adenosyl-L-methionine is bound by residues 35 to 37, aspartate 55, phenylalanine 79, aspartate 101, and glutamine 108; that span reads GGH.

This sequence belongs to the methyltransferase superfamily. RsmH family.

It is found in the cytoplasm. It carries out the reaction cytidine(1402) in 16S rRNA + S-adenosyl-L-methionine = N(4)-methylcytidine(1402) in 16S rRNA + S-adenosyl-L-homocysteine + H(+). In terms of biological role, specifically methylates the N4 position of cytidine in position 1402 (C1402) of 16S rRNA. The sequence is that of Ribosomal RNA small subunit methyltransferase H from Pectobacterium carotovorum subsp. carotovorum (strain PC1).